A 288-amino-acid polypeptide reads, in one-letter code: ATP synthase gamma chain (288 aa).

Belongs to the ATPase gamma chain family. As to quaternary structure, F-type ATPases have 2 components, CF(1) - the catalytic core - and CF(0) - the membrane proton channel. CF(1) has five subunits: alpha(3), beta(3), gamma(1), delta(1), epsilon(1). CF(0) has three main subunits: a, b and c.

It is found in the cell membrane. Functionally, produces ATP from ADP in the presence of a proton gradient across the membrane. The gamma chain is believed to be important in regulating ATPase activity and the flow of protons through the CF(0) complex. This Staphylococcus aureus (strain Mu3 / ATCC 700698) protein is ATP synthase gamma chain.